The chain runs to 609 residues: Ataxin-10 homolog (609 aa).

Disordered stretches follow at residues 265–293 (KSTT…TTTG), 405–426 (KQQE…SKDS), and 461–490 (SDTN…KGFN). Over residues 266-292 (STTESTTESTTTESTDSTTDSTTTTTT) the composition is skewed to low complexity. Residues 466-479 (SSSSSSSSSSSTTT) show a composition bias toward low complexity. Positions 480 to 490 (DGETVTSKGFN) are enriched in polar residues.

It belongs to the ATXN10 family.

In terms of biological role, may play a role in the regulation of cytokinesis. This Dictyostelium discoideum (Social amoeba) protein is Ataxin-10 homolog (atxn10).